The chain runs to 355 residues: DNA polymerase IV (355 aa).

One can recognise a UmuC domain in the interval isoleucine 7 to glycine 188. Mg(2+)-binding residues include aspartate 11 and aspartate 106. The active site involves glutamate 107.

It belongs to the DNA polymerase type-Y family. As to quaternary structure, monomer. It depends on Mg(2+) as a cofactor.

It localises to the cytoplasm. It carries out the reaction DNA(n) + a 2'-deoxyribonucleoside 5'-triphosphate = DNA(n+1) + diphosphate. Poorly processive, error-prone DNA polymerase involved in untargeted mutagenesis. Copies undamaged DNA at stalled replication forks, which arise in vivo from mismatched or misaligned primer ends. These misaligned primers can be extended by PolIV. Exhibits no 3'-5' exonuclease (proofreading) activity. May be involved in translesional synthesis, in conjunction with the beta clamp from PolIII. In Legionella pneumophila (strain Lens), this protein is DNA polymerase IV.